Reading from the N-terminus, the 386-residue chain is Patatin-2-Kuras 2 (386 aa).

The signal sequence occupies residues 1 to 23 (MATTKSFLILFFMILATTSSTCA). A PNPLA domain is found at 32-229 (LSIDGGGIKG…TVGDPALLSL (198 aa)). The GXGXXG motif lies at 36-41 (GGGIKG). Positions 75–79 (GTSTG) match the GXSXG motif. Catalysis depends on serine 77, which acts as the Nucleophile. N-linked (GlcNAc...) asparagine glycosylation occurs at asparagine 115. Aspartate 215 acts as the Proton acceptor in catalysis. A DGA/G motif is present at residues 215–217 (DGA). Residues 321–384 (ENALTGTTTE…DRKKLRANKA (64 aa)) are a coiled coil.

This sequence belongs to the patatin family.

The protein localises to the vacuole. Its function is as follows. Probable lipolytic acyl hydrolase (LAH), an activity which is thought to be involved in the response of tubers to pathogens. The sequence is that of Patatin-2-Kuras 2 (pat2-k2) from Solanum tuberosum (Potato).